A 154-amino-acid polypeptide reads, in one-letter code: Myoglobin (154 aa).

Positions 2 to 148 constitute a Globin domain; it reads GLSDGEWQQV…FRNDIAAKYK (147 aa). At Ser4 the chain carries Phosphoserine. His65 serves as a coordination point for nitrite. His65 is an O2 binding site. His94 lines the heme b pocket.

This sequence belongs to the globin family. As to quaternary structure, monomeric.

It localises to the cytoplasm. It is found in the sarcoplasm. The enzyme catalyses Fe(III)-heme b-[protein] + nitric oxide + H2O = Fe(II)-heme b-[protein] + nitrite + 2 H(+). The catalysed reaction is H2O2 + AH2 = A + 2 H2O. Monomeric heme protein which primary function is to store oxygen and facilitate its diffusion within muscle tissues. Reversibly binds oxygen through a pentacoordinated heme iron and enables its timely and efficient release as needed during periods of heightened demand. Depending on the oxidative conditions of tissues and cells, and in addition to its ability to bind oxygen, it also has a nitrite reductase activity whereby it regulates the production of bioactive nitric oxide. Under stress conditions, like hypoxia and anoxia, it also protects cells against reactive oxygen species thanks to its pseudoperoxidase activity. The chain is Myoglobin (MB) from Equus quagga burchellii (Burchell's zebra).